Reading from the N-terminus, the 633-residue chain is Pesticidal crystal protein Cry2Aa (633 aa).

Belongs to the delta endotoxin family.

Functionally, promotes colloidosmotic lysis by binding to the midgut epithelial cells of both dipteran (Aedes aegypti) and lepidopteran (Manduca sexta) larvae. In Bacillus thuringiensis subsp. kurstaki, this protein is Pesticidal crystal protein Cry2Aa (cry2Aa).